The primary structure comprises 632 residues: Probable potassium transport system protein Kup (632 aa).

12 helical membrane passes run 19–39, 59–79, 110–130, 146–166, 178–198, 221–241, 256–276, 298–318, 346–366, 375–395, 403–423, and 428–448; these read LVVG…LYSL, IISM…VMFV, LIMM…VITP, PGLS…LFFI, FGPI…IHLV, LQAF…EALY, WFVL…AMLL, MVLL…SGAF, IYMP…VLAF, AYGI…ALVM, PALV…FFAA, and IAEG…LLMT.

It belongs to the HAK/KUP transporter (TC 2.A.72) family.

The protein resides in the cell inner membrane. The enzyme catalyses K(+)(in) + H(+)(in) = K(+)(out) + H(+)(out). In terms of biological role, transport of potassium into the cell. Likely operates as a K(+):H(+) symporter. The polypeptide is Probable potassium transport system protein Kup (Cupriavidus metallidurans (strain ATCC 43123 / DSM 2839 / NBRC 102507 / CH34) (Ralstonia metallidurans)).